We begin with the raw amino-acid sequence, 76 residues long: Small ribosomal subunit protein uS17 (76 aa).

It belongs to the universal ribosomal protein uS17 family. In terms of assembly, part of the 30S ribosomal subunit.

In terms of biological role, one of the primary rRNA binding proteins, it binds specifically to the 5'-end of 16S ribosomal RNA. This Anaplasma phagocytophilum (strain HZ) protein is Small ribosomal subunit protein uS17.